Reading from the N-terminus, the 137-residue chain is MWKKKKVKAGVLLYAVTIAAIFSLLLQFYLNRQVAHYQDYALNKEKLVAFAMAKRTKDKVEQESGEQFFNLGQVSYQNKKTGLVTRVRTDKSQYEFLFPSVKIKEEKRDKKEEVATDSSEKVEKKKSEEKPEKKENS.

The chain crosses the membrane as a helical span at residues 10 to 30 (GVLLYAVTIAAIFSLLLQFYL). Positions 106 to 137 (EKRDKKEEVATDSSEKVEKKKSEEKPEKKENS) are disordered.

As to quaternary structure, the transformation pili are flexible filaments, consisting mainly of the major pilin ComGC and smaller amounts of the minor pilins, including at least ComGD, ComGF and ComGG, and perhaps ComGE. Interacts with ComGC; the interaction is probably direct. Interacts with ComGD. Interacts with ComGE. Interacts with ComGF. May act as a link between ComGC, ComGD and ComGF.

The protein localises to the fimbrium. It localises to the cell membrane. Functionally, required for formation of the type IV-like pilus (T4P) that plays a role in transformation. Transformation pili are dynamically extended and retracted, perhaps thereby promoting DNA uptake and transformation. Required for transformation. The sequence is that of Competence protein ComGG from Streptococcus pneumoniae (strain ATCC BAA-255 / R6).